An 81-amino-acid polypeptide reads, in one-letter code: Photosystem I iron-sulfur center (81 aa).

2 consecutive 4Fe-4S ferredoxin-type domains span residues 2 to 31 and 39 to 68; these read SHAV…MVPW and IAAS…IRVY. [4Fe-4S] cluster contacts are provided by Cys11, Cys14, Cys17, Cys21, Cys48, Cys51, Cys54, and Cys58.

As to quaternary structure, the cyanobacterial PSI reaction center is composed of one copy each of PsaA,B,C,D,E,F,I,J,K,L,M and X, and forms trimeric complexes. [4Fe-4S] cluster is required as a cofactor.

It localises to the cellular thylakoid membrane. It catalyses the reaction reduced [plastocyanin] + hnu + oxidized [2Fe-2S]-[ferredoxin] = oxidized [plastocyanin] + reduced [2Fe-2S]-[ferredoxin]. In terms of biological role, apoprotein for the two 4Fe-4S centers FA and FB of photosystem I (PSI); essential for photochemical activity. FB is the terminal electron acceptor of PSI, donating electrons to ferredoxin. The C-terminus interacts with PsaA/B/D and helps assemble the protein into the PSI complex. Required for binding of PsaD and PsaE to PSI. PSI is a plastocyanin/cytochrome c6-ferredoxin oxidoreductase, converting photonic excitation into a charge separation, which transfers an electron from the donor P700 chlorophyll pair to the spectroscopically characterized acceptors A0, A1, FX, FA and FB in turn. The sequence is that of Photosystem I iron-sulfur center from Prochlorococcus marinus (strain MIT 9313).